Reading from the N-terminus, the 721-residue chain is Glycine--tRNA ligase beta subunit (721 aa).

The protein belongs to the class-II aminoacyl-tRNA synthetase family. Tetramer of two alpha and two beta subunits.

It localises to the cytoplasm. It catalyses the reaction tRNA(Gly) + glycine + ATP = glycyl-tRNA(Gly) + AMP + diphosphate. The protein is Glycine--tRNA ligase beta subunit of Sinorhizobium medicae (strain WSM419) (Ensifer medicae).